A 177-amino-acid chain; its full sequence is Transcription termination/antitermination protein NusG (177 aa).

A KOW domain is found at 128 to 156 (ETVKVIDGPFANFTGSIEEIDYDKSKVKV).

The protein belongs to the NusG family.

In terms of biological role, participates in transcription elongation, termination and antitermination. Stimulates RNA polymerase pausing at U107 and U144 in the trp leader. NusG-stimulated pausing is sequence specific. Does not affect trp leader termination. In Bacillus subtilis (strain 168), this protein is Transcription termination/antitermination protein NusG.